A 276-amino-acid polypeptide reads, in one-letter code: Ribosomal RNA small subunit methyltransferase J (276 aa).

Residues 135-136 (ER) and Asp-191 each bind S-adenosyl-L-methionine.

It belongs to the methyltransferase superfamily. RsmJ family.

The protein resides in the cytoplasm. It catalyses the reaction guanosine(1516) in 16S rRNA + S-adenosyl-L-methionine = N(2)-methylguanosine(1516) in 16S rRNA + S-adenosyl-L-homocysteine + H(+). Specifically methylates the guanosine in position 1516 of 16S rRNA. The chain is Ribosomal RNA small subunit methyltransferase J from Hydrogenovibrio crunogenus (strain DSM 25203 / XCL-2) (Thiomicrospira crunogena).